A 153-amino-acid chain; its full sequence is Regulator of sigma D (153 aa).

It belongs to the Rsd/AlgQ family. In terms of assembly, interacts with RpoD.

The protein localises to the cytoplasm. Binds RpoD and negatively regulates RpoD-mediated transcription activation by preventing the interaction between the primary sigma factor RpoD with the catalytic core of the RNA polymerase and with promoter DNA. May be involved in replacement of the RNA polymerase sigma subunit from RpoD to RpoS during the transition from exponential growth to the stationary phase. The polypeptide is Regulator of sigma D (Pectobacterium carotovorum subsp. carotovorum (strain PC1)).